The primary structure comprises 421 residues: Adenylosuccinate synthetase (421 aa).

Residues 11–17 and 39–41 each bind GTP; these read GDEGKGK and GHT. Asp12 serves as the catalytic Proton acceptor. Positions 12 and 39 each coordinate Mg(2+). Residues 12–15, 37–40, Thr124, Arg138, Gln220, Thr235, and Arg299 contribute to the IMP site; these read DEGK and NAGH. The active-site Proton donor is the His40. Position 295-301 (295-301) interacts with substrate; it reads TTTGRPR. Residues Arg301, 327–329, and 409–411 each bind GTP; these read KLD and SVG.

This sequence belongs to the adenylosuccinate synthetase family. As to quaternary structure, homodimer. Requires Mg(2+) as cofactor.

It localises to the cytoplasm. It catalyses the reaction IMP + L-aspartate + GTP = N(6)-(1,2-dicarboxyethyl)-AMP + GDP + phosphate + 2 H(+). The protein operates within purine metabolism; AMP biosynthesis via de novo pathway; AMP from IMP: step 1/2. In terms of biological role, plays an important role in the de novo pathway of purine nucleotide biosynthesis. Catalyzes the first committed step in the biosynthesis of AMP from IMP. This Methanothrix thermoacetophila (strain DSM 6194 / JCM 14653 / NBRC 101360 / PT) (Methanosaeta thermophila) protein is Adenylosuccinate synthetase.